Consider the following 237-residue polypeptide: Glutathione-independent glyoxalase HSP31 (237 aa).

Active-site residues include cysteine 138, histidine 139, and glutamate 170. Cysteine 138 is modified (cysteine sulfinic acid (-SO2H)).

Belongs to the peptidase C56 family. HSP31-like subfamily. In terms of assembly, homodimer. Post-translationally, cys-138 is easily oxidized to sulfinic acid.

The protein localises to the cytoplasm. It localises to the P-body. It carries out the reaction methylglyoxal + H2O = (R)-lactate + H(+). Functionally, catalyzes the conversion of methylglyoxal (MG) to D-lactate in a single glutathione (GSH)-independent step. May play a role in detoxifying endogenously produced glyoxals. Involved in protection against reactive oxygen species (ROS). Important for viability in stationary phase. May negatively regulate TORC1 in response to nutrient limitation. This chain is Glutathione-independent glyoxalase HSP31, found in Saccharomyces cerevisiae (strain ATCC 204508 / S288c) (Baker's yeast).